The following is a 408-amino-acid chain: UV excision repair protein RAD23 homolog B (408 aa).

One can recognise a Ubiquitin-like domain in the interval 1–79 (MLVTLKTLQQ…VVVMVTKPKA (79 aa)). Low complexity predominate over residues 80–111 (VTTPAPATTQQSNSAATTTVSSSTAPAVTQAP). The tract at residues 80-176 (VTTPAPATTQ…TSGDSSRSNL (97 aa)) is disordered. Positions 112–122 (APAPASAPTPT) are enriched in pro residues. The span at 123–143 (PVSVTPAPTTASSEPAPASAA) shows a compositional bias: low complexity. Basic and acidic residues predominate over residues 144–153 (KQEKPAERPV). The segment covering 154–174 (ETPVATTPTSTDSTSGDSSRS) has biased composition (low complexity). 2 positions are modified to phosphothreonine: threonine 155 and threonine 164. Serine 174 is subject to Phosphoserine. At threonine 186 the chain carries Phosphothreonine. The region spanning 188–228 (QSYENMVTEIMSMGYEREQVIAALRASFNNPDRAVEYLLMG) is the UBA 1 domain. Position 199 is a phosphoserine (serine 199). Position 202 is a phosphotyrosine (tyrosine 202). The interval 236-274 (QAVVDPPPAASTGAPQSSVAAAAATTTATTTTTSSGGHP) is disordered. Residues 255-268 (AAAAATTTATTTTT) show a composition bias toward low complexity. In terms of domain architecture, STI1 spans 273 to 316 (HPLEFLRNQPQFQQMRQIIQQNPSLLPALLQQIGRENPQLLQQI). Residues 363 to 403 (PQEKEAIERLKALGFPEGLVIQAYFACEKNENLAANFLLQQ) form the UBA 2 domain.

It belongs to the RAD23 family. Component of the XPC complex composed of XPC, RAD23B and CETN2. Interacts with NGLY1 and PSMC1. Interacts with ATXN3. Interacts with PSMD4 and PSMC5. Interacts with AMFR. Interacts with VCP; the interaction is indirect and mediated by NGLY1.

It localises to the nucleus. The protein resides in the cytoplasm. Functionally, multiubiquitin chain receptor involved in modulation of proteasomal degradation. Binds to polyubiquitin chains. Proposed to be capable to bind simultaneously to the 26S proteasome and to polyubiquitinated substrates and to deliver ubiquitinated proteins to the proteasome. May play a role in endoplasmic reticulum-associated degradation (ERAD) of misfolded glycoproteins by association with PNGase and delivering deglycosylated proteins to the proteasome. Its function is as follows. Involved in global genome nucleotide excision repair (GG-NER) by acting as component of the XPC complex. Cooperatively with CETN2 appears to stabilize XPC. May protect XPC from proteasomal degradation. In terms of biological role, the XPC complex is proposed to represent the first factor bound at the sites of DNA damage and together with other core recognition factors, XPA, RPA and the TFIIH complex, is part of the pre-incision (or initial recognition) complex. The XPC complex recognizes a wide spectrum of damaged DNA characterized by distortions of the DNA helix such as single-stranded loops, mismatched bubbles or single-stranded overhangs. The orientation of XPC complex binding appears to be crucial for inducing a productive NER. XPC complex is proposed to recognize and to interact with unpaired bases on the undamaged DNA strand which is followed by recruitment of the TFIIH complex and subsequent scanning for lesions in the opposite strand in a 5'-to-3' direction by the NER machinery. Cyclobutane pyrimidine dimers (CPDs) which are formed upon UV-induced DNA damage esacpe detection by the XPC complex due to a low degree of structural perurbation. Instead they are detected by the UV-DDB complex which in turn recruits and cooperates with the XPC complex in the respective DNA repair. In vitro, the XPC:RAD23B dimer is sufficient to initiate NER; it preferentially binds to cisplatin and UV-damaged double-stranded DNA and also binds to a variety of chemically and structurally diverse DNA adducts. XPC:RAD23B contacts DNA both 5' and 3' of a cisplatin lesion with a preference for the 5' side. XPC:RAD23B induces a bend in DNA upon binding. XPC:RAD23B stimulates the activity of DNA glycosylases TDG and SMUG1. This chain is UV excision repair protein RAD23 homolog B (RAD23B), found in Bos taurus (Bovine).